A 564-amino-acid polypeptide reads, in one-letter code: Potassium-transporting ATPase potassium-binding subunit (564 aa).

10 consecutive transmembrane segments (helical) span residues tyrosine 4–glycine 24, threonine 67–phenylalanine 87, valine 135–leucine 155, leucine 179–proline 199, phenylalanine 258–valine 278, alanine 286–glutamate 306, alanine 382–isoleucine 402, leucine 420–alanine 440, leucine 487–leucine 507, and glycine 528–leucine 548.

It belongs to the KdpA family. In terms of assembly, the system is composed of three essential subunits: KdpA, KdpB and KdpC.

It is found in the cell inner membrane. Part of the high-affinity ATP-driven potassium transport (or Kdp) system, which catalyzes the hydrolysis of ATP coupled with the electrogenic transport of potassium into the cytoplasm. This subunit binds the periplasmic potassium ions and delivers the ions to the membrane domain of KdpB through an intramembrane tunnel. The sequence is that of Potassium-transporting ATPase potassium-binding subunit from Pseudomonas fluorescens (strain Pf0-1).